Here is a 233-residue protein sequence, read N- to C-terminus: MPDPRPLTPDQTHGRGHAEAAVDWEASRLYRLAQSERRAWTVAWAALAVTALSLIAIATMLPLKTTIPYLIEVEKSSGAASVVTQFEPRDFTPDTLMNQYWLTRYVAARERYDWHTIQHDYDYVRLLSAPAVRHDYETSYEAPDAPDRKYGAGTTLAVKILSAIDHGKGVGTVRFVRTRRDADGQGAAESSIWVATVAFAYDQPRALTQAQRWLNPLGFAVTSYRVDAEAGQP.

Residues Val42 to Pro62 traverse the membrane as a helical segment.

The protein belongs to the virB8 family.

It is found in the cell inner membrane. In Bordetella parapertussis (strain 12822 / ATCC BAA-587 / NCTC 13253), this protein is Type IV secretion system protein PtlE homolog (ptlE).